A 390-amino-acid polypeptide reads, in one-letter code: Neuromedin-B receptor (390 aa).

Over residues 1 to 19 (MPSKSLSNLSVTTGANESG) the composition is skewed to polar residues. A disordered region spans residues 1-22 (MPSKSLSNLSVTTGANESGSVP). The Extracellular portion of the chain corresponds to 1-41 (MPSKSLSNLSVTTGANESGSVPEGWERDFLPASDGTTTELV). 2 N-linked (GlcNAc...) asparagine glycosylation sites follow: asparagine 8 and asparagine 16. The chain crosses the membrane as a helical span at residues 42 to 65 (IRCVIPSLYLLIITVGLLGNIMLV). At 66 to 79 (KIFITNSAMRSVPN) the chain is on the cytoplasmic side. A helical transmembrane segment spans residues 80–99 (IFISNLAAGDLLLLLTCVPV). The Extracellular segment spans residues 100–117 (DASRYFFDEWMFGKVGCK). The cysteines at positions 116 and 198 are disulfide-linked. A helical transmembrane segment spans residues 118–139 (LIPVIQLTSVGVSVFTLTALSA). The Cytoplasmic segment spans residues 140–156 (DRYRAIVNPMDMQTSGA). The chain crosses the membrane as a helical span at residues 157 to 177 (LLRTCVKAMGIWVVSVLLAVP). The Extracellular portion of the chain corresponds to 178 to 211 (EAVFSEVARISSLDNSSFTACIPYPQTDELHPKI). Asparagine 192 is a glycosylation site (N-linked (GlcNAc...) asparagine). Residues 212-235 (HSVLIFLVYFLIPLAIISIYYYHI) traverse the membrane as a helical segment. At 236 to 266 (AKTLIKSAHNLPGEYNEHTKKQMETRKRLAK) the chain is on the cytoplasmic side. Residues 267–287 (IVLVFVGCFIFCWFPNHILYM) form a helical membrane-spanning segment. Topologically, residues 288 to 299 (YRSFNYNEIDPS) are extracellular. A helical membrane pass occupies residues 300–327 (LGHMIVTLVARVLSFGNSCVNPFALYLL). At 328–390 (SESFRRHFNS…GHSMKQEMAL (63 aa)) the chain is on the cytoplasmic side. A lipid anchor (S-palmitoyl cysteine) is attached at cysteine 341. The residue at position 352 (serine 352) is a Phosphoserine.

It belongs to the G-protein coupled receptor 1 family. Expressed in epididymis (at protein level).

The protein resides in the cell membrane. Its function is as follows. Receptor for neuromedin-B. Contributes to the maintenance of basal sigh rate through signaling in the pre-Botzinger complex, a cluster of several thousand neurons in the ventrolateral medulla responsible for inspiration during respiratory activity. Contributes to the induction of sneezing following exposure to chemical irritants or allergens which causes release of NMB by nasal sensory neurons and activation of NMBR-expressing neurons in the sneeze-evoking region of the brainstem. These in turn activate neurons of the caudal ventral respiratory group, giving rise to the sneezing response. Contributes to induction of acute itch, possibly through its activation on dorsal root ganglion neurons by the NMB peptide. Plays a role in the innate immune response to influenza A virus infection by enhancing interferon alpha expression and reducing expression of IL6. Plays a role in CSF1-induced proliferation of osteoclast precursors by contributing to the positive regulation of the expression of the CSF1 receptor CSF1R. This chain is Neuromedin-B receptor (NMBR), found in Homo sapiens (Human).